The following is a 390-amino-acid chain: 4-O-beta-D-mannosyl-D-glucose phosphorylase (390 aa).

It belongs to the glycosyl hydrolase 130 family.

It catalyses the reaction 4-O-beta-D-mannopyranosyl-D-glucopyranose + phosphate = alpha-D-mannose 1-phosphate + D-glucose. Its function is as follows. Converts 4-O-beta-D-mannopyranosyl-D-glucopyranose (Man-Glc) to mannose 1-phosphate (Man1P) and glucose. Involved in a mannan catabolic pathway which feeds into glycolysis. This is 4-O-beta-D-mannosyl-D-glucose phosphorylase from Bacteroides fragilis (strain ATCC 25285 / DSM 2151 / CCUG 4856 / JCM 11019 / LMG 10263 / NCTC 9343 / Onslow / VPI 2553 / EN-2).